Here is a 522-residue protein sequence, read N- to C-terminus: 2-isopropylmalate synthase (522 aa).

The region spanning Val5–His267 is the Pyruvate carboxyltransferase domain. Residues Asp14, His202, His204, and Asn238 each coordinate Mn(2+). The interval Gln392 to Val522 is regulatory domain.

This sequence belongs to the alpha-IPM synthase/homocitrate synthase family. LeuA type 1 subfamily. Homodimer. Requires Mn(2+) as cofactor.

It localises to the cytoplasm. It carries out the reaction 3-methyl-2-oxobutanoate + acetyl-CoA + H2O = (2S)-2-isopropylmalate + CoA + H(+). Its pathway is amino-acid biosynthesis; L-leucine biosynthesis; L-leucine from 3-methyl-2-oxobutanoate: step 1/4. Its function is as follows. Catalyzes the condensation of the acetyl group of acetyl-CoA with 3-methyl-2-oxobutanoate (2-ketoisovalerate) to form 3-carboxy-3-hydroxy-4-methylpentanoate (2-isopropylmalate). The protein is 2-isopropylmalate synthase of Shewanella baltica (strain OS223).